Here is a 218-residue protein sequence, read N- to C-terminus: MNSSLQISKKRKFVADGVFHAELNELFTREFNKDEGYSGVELKTSPGLTEIIIRASKTQAVVGPNARRIQELCSLVQKRFNFKEGTVVLFAEKILNRGLCAVAQAESLKLKLLAGLPVRKACYAIVHQIMTRGAKGCEVIVSGKLRAQRAKSMKFRDGYMIKSGQPSKDFIDFACRHVLLRQGTLGVKVAIMLPYDETRKIHGACNIPQPDVVVIRDA.

Met-1 is modified (N-acetylmethionine). The region spanning Leu-23–Leu-95 is the KH type-2 domain.

This sequence belongs to the universal ribosomal protein uS3 family.

The sequence is that of Small ribosomal subunit protein uS3 (rps3) from Dictyostelium discoideum (Social amoeba).